A 292-amino-acid chain; its full sequence is Elongation factor Ts (292 aa).

The segment at 80 to 83 is involved in Mg(2+) ion dislocation from EF-Tu; the sequence is TDFV.

This sequence belongs to the EF-Ts family.

The protein resides in the cytoplasm. Associates with the EF-Tu.GDP complex and induces the exchange of GDP to GTP. It remains bound to the aminoacyl-tRNA.EF-Tu.GTP complex up to the GTP hydrolysis stage on the ribosome. This chain is Elongation factor Ts, found in Cupriavidus pinatubonensis (strain JMP 134 / LMG 1197) (Cupriavidus necator (strain JMP 134)).